We begin with the raw amino-acid sequence, 689 residues long: Elongation factor G (689 aa).

In terms of domain architecture, tr-type G spans 8-282 (LNTRNIGIMA…AVVDYLPSPI (275 aa)). GTP-binding positions include 17–24 (AHIDAGKT), 81–85 (DTPGH), and 135–138 (NKMD).

The protein belongs to the TRAFAC class translation factor GTPase superfamily. Classic translation factor GTPase family. EF-G/EF-2 subfamily.

Its subcellular location is the cytoplasm. Its function is as follows. Catalyzes the GTP-dependent ribosomal translocation step during translation elongation. During this step, the ribosome changes from the pre-translocational (PRE) to the post-translocational (POST) state as the newly formed A-site-bound peptidyl-tRNA and P-site-bound deacylated tRNA move to the P and E sites, respectively. Catalyzes the coordinated movement of the two tRNA molecules, the mRNA and conformational changes in the ribosome. The polypeptide is Elongation factor G (Mycoplasma capricolum subsp. capricolum (strain California kid / ATCC 27343 / NCTC 10154)).